The following is a 174-amino-acid chain: Myosin regulatory light chain sqh (174 aa).

T21 bears the Phosphothreonine mark. At S22 the chain carries Phosphoserine. 2 EF-hand domains span residues 31 to 66 (AQIA…LGKN) and 100 to 135 (DPED…MGDR). 4 residues coordinate Ca(2+): D44, N46, D48, and D55.

In terms of assembly, myosin is a hexamer of 2 heavy chains and 4 light chains. Post-translationally, phosphorylation plays a central role in myosin regulation.

Its function is as follows. Required for cytokinesis, could regulate contractile ring function. In Drosophila melanogaster (Fruit fly), this protein is Myosin regulatory light chain sqh (sqh).